The chain runs to 156 residues: Transcriptional repressor NrdR (156 aa).

A zinc finger spans residues 3–34 (CPKCNSTHSRVVDSRHADEVNAIRRRRECEEC). The ATP-cone domain maps to 49–139 (LIVVKKDGTR…VYKEFKDVDQ (91 aa)).

This sequence belongs to the NrdR family. Zn(2+) is required as a cofactor.

Functionally, negatively regulates transcription of bacterial ribonucleotide reductase nrd genes and operons by binding to NrdR-boxes. This chain is Transcriptional repressor NrdR, found in Staphylococcus saprophyticus subsp. saprophyticus (strain ATCC 15305 / DSM 20229 / NCIMB 8711 / NCTC 7292 / S-41).